The sequence spans 103 residues: Large ribosomal subunit protein uL23c (103 aa).

Belongs to the universal ribosomal protein uL23 family. In terms of assembly, part of the 50S ribosomal subunit.

It is found in the plastid. The protein resides in the chloroplast. In terms of biological role, binds to 23S rRNA. The protein is Large ribosomal subunit protein uL23c (rpl23) of Gracilaria tenuistipitata var. liui (Red alga).